We begin with the raw amino-acid sequence, 146 residues long: Large ribosomal subunit protein uL15 (146 aa).

The interval 1 to 58 (MKLNELSPPKGARTARKRKGRGPGSGLGKTAGKGHKGQKARSGGGVRPGFEGGQMPVH) is disordered. Composition is skewed to gly residues over residues 22-31 (GPGSGLGKTA) and 42-52 (SGGGVRPGFEG).

It belongs to the universal ribosomal protein uL15 family. As to quaternary structure, part of the 50S ribosomal subunit.

In terms of biological role, binds to the 23S rRNA. In Desulfatibacillum aliphaticivorans, this protein is Large ribosomal subunit protein uL15.